A 438-amino-acid chain; its full sequence is Protein translocase subunit SecY (438 aa).

10 helical membrane-spanning segments follow: residues 18-38 (ILFT…PSPG), 76-96 (VGVM…VVIP), 121-141 (IALA…GGLL), 154-174 (IFSL…VMWM), 177-197 (LITE…GIAA), 212-232 (GVIF…VVFV), 269-289 (VIPV…TQLV), 315-335 (PVYI…YVSV), 375-395 (LPGS…LQIG), and 398-418 (GEVQ…GVGL).

It belongs to the SecY/SEC61-alpha family. In terms of assembly, component of the Sec protein translocase complex. Heterotrimer consisting of SecY, SecE and SecG subunits. The heterotrimers can form oligomers, although 1 heterotrimer is thought to be able to translocate proteins. Interacts with the ribosome. Interacts with SecDF, and other proteins may be involved. Interacts with SecA.

It is found in the cell membrane. The central subunit of the protein translocation channel SecYEG. Consists of two halves formed by TMs 1-5 and 6-10. These two domains form a lateral gate at the front which open onto the bilayer between TMs 2 and 7, and are clamped together by SecE at the back. The channel is closed by both a pore ring composed of hydrophobic SecY resides and a short helix (helix 2A) on the extracellular side of the membrane which forms a plug. The plug probably moves laterally to allow the channel to open. The ring and the pore may move independently. In Mycobacterium leprae (strain TN), this protein is Protein translocase subunit SecY.